Here is a 344-residue protein sequence, read N- to C-terminus: Probable aldo-keto reductase 1 (344 aa).

The active-site Proton donor is Tyr-63. Residue His-130 participates in substrate binding. 209–219 provides a ligand contact to NADP(+); that stretch reads SPLGLGFFAAG.

The protein belongs to the aldo/keto reductase family.

This chain is Probable aldo-keto reductase 1, found in Arabidopsis thaliana (Mouse-ear cress).